The primary structure comprises 854 residues: Fibronectin-binding protein PlpA (854 aa).

Low complexity predominate over residues 1–24; that stretch reads MDNNQNNFNQPGQQGFDQYQQQSG. The tract at residues 1 to 33 is disordered; that stretch reads MDNNQNNFNQPGQQGFDQYQQQSGALVSYGYDA. Residues 91–109 are fibronectin-binding; that stretch reads QYNQQQNQGYEQQYDEYGN. Disordered regions lie at residues 247–327, 411–434, 743–766, and 835–854; these read YEQE…LEAP, SSNN…EDSN, TINP…QLPP, and IQPS…YNNR. Residues 258–267 show a composition bias toward basic and acidic residues; sequence EPAHEQDLRE. Composition is skewed to polar residues over residues 311–320 and 411–428; these read TVNQPDQTPI and SSNN…TSNE. The stretch at 384–622 forms a coiled coil; the sequence is NLEEIQKVKL…SSFQKALSEV (239 aa). The segment covering 746–764 has biased composition (pro residues); sequence PPQPQPQALPQPHPQPQQL.

It is found in the cell membrane. Binds immobilized fibronectin, specifically the gelatin/heparin-binding domain. In Mycoplasmoides gallisepticum (strain R(low / passage 15 / clone 2)) (Mycoplasma gallisepticum), this protein is Fibronectin-binding protein PlpA (plpA).